The primary structure comprises 744 residues: 1,4-alpha-glucan branching enzyme GlgB (744 aa).

The active-site Nucleophile is the aspartate 415. Residue glutamate 468 is the Proton donor of the active site.

This sequence belongs to the glycosyl hydrolase 13 family. GlgB subfamily. As to quaternary structure, monomer.

It catalyses the reaction Transfers a segment of a (1-&gt;4)-alpha-D-glucan chain to a primary hydroxy group in a similar glucan chain.. Its pathway is glycan biosynthesis; glycogen biosynthesis. Functionally, catalyzes the formation of the alpha-1,6-glucosidic linkages in glycogen by scission of a 1,4-alpha-linked oligosaccharide from growing alpha-1,4-glucan chains and the subsequent attachment of the oligosaccharide to the alpha-1,6 position. In Shewanella frigidimarina (strain NCIMB 400), this protein is 1,4-alpha-glucan branching enzyme GlgB.